The sequence spans 817 residues: LPS-assembly protein LptD (817 aa).

Positions 1 to 45 (MDRLPLPHALHVPTHRPFAAPLPPRRLLARLAALMLCGVPLAVLA) are cleaved as a signal peptide.

It belongs to the LptD family. As to quaternary structure, component of the lipopolysaccharide transport and assembly complex. Interacts with LptE and LptA.

The protein localises to the cell outer membrane. Together with LptE, is involved in the assembly of lipopolysaccharide (LPS) at the surface of the outer membrane. The polypeptide is LPS-assembly protein LptD (Acidovorax sp. (strain JS42)).